Reading from the N-terminus, the 372-residue chain is Glutamate 5-kinase (372 aa).

Residue Lys14 coordinates ATP. 3 residues coordinate substrate: Ser54, Asp141, and Asn153. Residues 173-174 (TD) and 215-221 (TGGMSTK) contribute to the ATP site. Residues 280–358 (QGSLVLDAGA…DEIESVLGYD (79 aa)) enclose the PUA domain.

It belongs to the glutamate 5-kinase family.

Its subcellular location is the cytoplasm. The catalysed reaction is L-glutamate + ATP = L-glutamyl 5-phosphate + ADP. Its pathway is amino-acid biosynthesis; L-proline biosynthesis; L-glutamate 5-semialdehyde from L-glutamate: step 1/2. In terms of biological role, catalyzes the transfer of a phosphate group to glutamate to form L-glutamate 5-phosphate. In Shewanella oneidensis (strain ATCC 700550 / JCM 31522 / CIP 106686 / LMG 19005 / NCIMB 14063 / MR-1), this protein is Glutamate 5-kinase.